The following is a 3127-amino-acid chain: Probable polyketide synthase 33 (3127 aa).

The Ketosynthase family 3 (KS3) domain maps to 24–457 (SGDVAVVGIG…GSNVCLILSE (434 aa)). Active-site for beta-ketoacyl synthase activity residues include cysteine 196, histidine 335, and histidine 380. The tract at residues 660 to 693 (GVSADIIIGHSLGEISSAYCSGMIDFQTLCYLTY) is acyl/malonyl transferase. Catalysis depends on serine 670, which acts as the For acyl/malonyl transferase activity. The N-terminal hotdog fold stretch occupies residues 958 to 1080 (GPSIHSLGNN…GNFSLFKHNI (123 aa)). Positions 958–1257 (GPSIHSLGNN…CTIVGSNPDS (300 aa)) constitute a PKS/mFAS DH domain. Residue histidine 992 is the Proton acceptor; for dehydratase activity of the active site. The interval 1096–1257 (NFTTISKQDF…CTIVGSNPDS (162 aa)) is C-terminal hotdog fold. Aspartate 1168 (proton donor; for dehydratase activity) is an active-site residue. Positions 1369 to 1394 (SNNNNNNNNNNNNNNNNNNNNKNNGY) are disordered. The span at 1370–1394 (NNNNNNNNNNNNNNNNNNNNKNNGY) shows a compositional bias: low complexity. The 78-residue stretch at 2539 to 2616 (SNNEIIRSTI…QSIEIIKSAH (78 aa)) folds into the Carrier domain. Residue serine 2576 is modified to O-(pantetheine 4'-phosphoryl)serine. Residues 2617-2659 (NKNNNNNNINNNNNNNNNNNNNNNNNNNNNNNNNNNNNNNNNN) form a disordered region. Residues 2617–2671 (NKNNNNNNINNNNNNNNNNNNNNNNNNNNNNNNNNNNNNNNNNLVKKEQQSLDEF) adopt a coiled-coil conformation. A helical transmembrane segment spans residues 2937 to 2957 (VLTLYNIPITIFIAILIIDIF).

Requires pantetheine 4'-phosphate as cofactor.

Its subcellular location is the membrane. Its function is as follows. Probable polyketide synthase. The protein is Probable polyketide synthase 33 (pks33) of Dictyostelium discoideum (Social amoeba).